Reading from the N-terminus, the 541-residue chain is Protein VAPYRIN (541 aa).

One can recognise an MSP domain in the interval 4-138 (LIKLDPSNIV…IDSAIKVMFV (135 aa)). 10 ANK repeats span residues 176–205 (QGQT…DIEA), 209–238 (VGST…NTEG), 242–271 (SVFR…RVDS), 275–304 (DGNT…RTDV), 309–338 (EGDT…TKYV), 342–372 (LGKT…CAAA), 374–392 (KGEV…VING), 396–425 (NGWT…DLDA), 429–458 (DGYT…DVEA), and 462–491 (KGVS…SREG).

Interacts with EX70I at the periarbuscular membrane (PAM) around the arbuscule hyphal tips. Expressed in roots.

The protein resides in the cytoplasm. The protein localises to the nucleus. Its subcellular location is the cell membrane. Required for arbuscular mycorrhizal (AM) symbiosis with AM fungi (e.g. Glomus versiforme and Gigaspora gigantea) both during fungal passage across root epidermis and for arbuscule formation in cortical cells; this symbiosis promotes phosphorus (P) and copper (Cu) uptake. Essential for infection by symbiotic nitrogen-fixing rhizobial bacteria (e.g. Sinorhizobium meliloti) leading to the formation of root nodules. In Medicago truncatula (Barrel medic), this protein is Protein VAPYRIN.